Here is a 425-residue protein sequence, read N- to C-terminus: Orexin/Hypocretin receptor type 1 (425 aa).

Residues 1-46 (MEPSATPGPQMGVPTGVGDPSLVPPDYEEEFLSYLWRDYLYPKQYE) are Extracellular-facing. A required for response to orexin-A region spans residues 26 to 41 (DYEEEFLSYLWRDYLY). A helical membrane pass occupies residues 47-67 (WVLIAAYVAVFLVALVGNTLV). Residues 68 to 82 (CLAVWRNHHMRTVTN) lie on the Cytoplasmic side of the membrane. A helical membrane pass occupies residues 83 to 105 (YFIVNLSLADVLVTAICLPASLL). Over 106–119 (VDITESWLFGHALC) the chain is Extracellular. Cys119 and Cys202 form a disulfide bridge. A helical transmembrane segment spans residues 120–140 (KVIPYLQAVSVSVAVLTLSFI). At 141-160 (ALDRWYAIYHPLLFKSTARR) the chain is on the cytoplasmic side. Residues 161-182 (ARGSILGIWAVSPAVMVPQAAV) traverse the membrane as a helical segment. Residues 183–213 (MECSSVLPELANRTRLFSVCDERWADDLYPK) are Extracellular-facing. The chain crosses the membrane as a helical span at residues 214 to 235 (IYHSCFFIVTYLAPLGLMAMAY). Over 236–298 (FQIFRKLWGR…QMRARRKTAK (63 aa)) the chain is Cytoplasmic. The helical transmembrane segment at 299–321 (MLMVVLLVFALCYLPISVLNVLK) threads the bilayer. Topologically, residues 322-336 (RVFGMFRQTSDREAV) are extracellular. The chain crosses the membrane as a helical span at residues 337-360 (YACFTFSHWLVYANSAANPIIYNF). Residues 361 to 425 (LSGKFREQFK…VLTSVTTVLP (65 aa)) are Cytoplasmic-facing.

The protein belongs to the G-protein coupled receptor 1 family.

It is found in the cell membrane. Moderately selective excitatory receptor for orexin-A and, with a lower affinity, for orexin-B neuropeptide. Triggers an increase in cytoplasmic Ca(2+) levels in response to orexin-A binding. The sequence is that of Orexin/Hypocretin receptor type 1 from Sus scrofa (Pig).